Reading from the N-terminus, the 288-residue chain is NAD kinase (288 aa).

Catalysis depends on Asp73, which acts as the Proton acceptor. Residues 73–74, Arg78, 144–145, Asp174, 185–190, and Ala209 each bind NAD(+); these read DG, NE, and TAYSLS.

Belongs to the NAD kinase family. Requires a divalent metal cation as cofactor.

The protein resides in the cytoplasm. It carries out the reaction NAD(+) + ATP = ADP + NADP(+) + H(+). Its function is as follows. Involved in the regulation of the intracellular balance of NAD and NADP, and is a key enzyme in the biosynthesis of NADP. Catalyzes specifically the phosphorylation on 2'-hydroxyl of the adenosine moiety of NAD to yield NADP. This chain is NAD kinase, found in Porphyromonas gingivalis (strain ATCC BAA-308 / W83).